Consider the following 119-residue polypeptide: Large ribosomal subunit protein uL14 (119 aa).

Belongs to the universal ribosomal protein uL14 family. In terms of assembly, part of the 50S ribosomal subunit. Forms a cluster with proteins L3 and L19. In the 70S ribosome, L14 and L19 interact and together make contacts with the 16S rRNA in bridges B5 and B8.

Binds to 23S rRNA. Forms part of two intersubunit bridges in the 70S ribosome. The chain is Large ribosomal subunit protein uL14 from Wolbachia sp. subsp. Brugia malayi (strain TRS).